A 30-amino-acid polypeptide reads, in one-letter code: Kalata-B14 (30 aa).

The cyclopeptide (Gly-Asp) cross-link spans 1–30 (GLPVCGESCFGGTCNTPGCACDPWPVCTRD). Cystine bridges form between C5/C19, C9/C21, and C14/C27.

Post-translationally, this is a cyclic peptide.

Functionally, probably participates in a plant defense mechanism. This chain is Kalata-B14, found in Oldenlandia affinis.